The chain runs to 422 residues: MAGMYNQDGGGGAPIPSYGGDGYGGGGGYGGGDAGYGGRGASGGGSYGGRGGYGGGGGRGNRGGGGGGYQGGDRGGRGSGGGGRDGDWRCPNPSCGNVNFARRVECNKCGALAPSGTSSGANDRGGGGYSRGGGDSDRGGGRGGRNDSGRSYESSRYDGGSRSGGSYGSGSQRENGSYGQAPPPAAAIPSYDGSGSYPPPTGYGMEAVPPPTSYSGGPPSYGGPRGGYGSDAPSTGGRGGRSGGYDGGSAPRRQEASYEDAATEKVKQCDADCDDNCDNARIYISNLPPDVTTDELKDLFGGIGQVGRIKQKRGYKDQWPYNIKIYTDEKGNYKGDACLAYEDPSAAHSAGGFFNNYEMRGNKISVTMAEKSAPRAPTFDQRGGGRGGGGGGYGGGGGDRRRDNYSSGPDRNHHGGNRSRPY.

Disordered regions lie at residues 1 to 24 (MAGM…DGYG), 47 to 94 (YGGR…PNPS), 111 to 263 (ALAP…DAAT), and 368 to 422 (MAEK…SRPY). 2 stretches are compositionally biased toward gly residues: residues 8-24 (DGGG…DGYG) and 47-83 (YGGR…GGGG). The RanBP2-type zinc finger occupies 84–115 (RDGDWRCPNPSCGNVNFARRVECNKCGALAPS). A compositionally biased stretch (gly residues) spans 123 to 133 (DRGGGGYSRGG). The segment covering 134–156 (GDSDRGGGRGGRNDSGRSYESSR) has biased composition (basic and acidic residues). 2 stretches are compositionally biased toward gly residues: residues 219 to 229 (PSYGGPRGGYG) and 236 to 247 (GGRGGRSGGYDG). A compositionally biased stretch (basic and acidic residues) spans 252–263 (RRQEASYEDAAT). An RRM domain is found at 280–371 (ARIYISNLPP…NKISVTMAEK (92 aa)). The span at 382–397 (RGGGRGGGGGGYGGGG) shows a compositional bias: gly residues.

Belongs to the TAF15 family. Component of the TFIID complex. TFIID is composed of TATA binding protein (TBP) and a number of TBP-associated factors (TAFs) whose MWs range from 14-217 kDa. Interacts with TAF4, TAF4B, TAF5, TAF12B and TAF14. In terms of tissue distribution, expressed in roots, leaves and inflorescences.

The protein localises to the nucleus. Its function is as follows. TAFs are components of the transcription factor IID (TFIID) complex that is essential for mediating regulation of RNA polymerase transcription. In Arabidopsis thaliana (Mouse-ear cress), this protein is Transcription initiation factor TFIID subunit 15b (TAF15B).